The following is a 187-amino-acid chain: Protein TIFY 3B (187 aa).

The segment covering 1–10 (MTKVKDEPRA) has biased composition (basic and acidic residues). The tract at residues 1-50 (MTKVKDEPRASVEGGCGVADGDGGAAEIGGTGSVEKSINEVRSTEIQTAE) is disordered. The segment covering 14-32 (GGCGVADGDGGAAEIGGTG) has biased composition (gly residues). Residues 51-86 (PTVPPNQLTIFFGGSVTVFDGLPSEKVQEILRIAAK) enclose the Tify domain. Residues 139-163 (PIARRHSLQRFLEKRRDRLVNKNPY) carry the Jas motif. Positions 141–148 (ARRHSLQR) match the Nuclear localization signal motif. The interval 152-187 (KRRDRLVNKNPYPTSDFKKTDVPTGNVSIKEEFPTA) is disordered.

Belongs to the TIFY/JAZ family. As to quaternary structure, interacts with MYC2, AFPH2/NINJA, TIFY10A/JAZ1, TIFY10B/JAZ2, TIFY11A/JAZ5, TIFY11B/JAZ6, TIFY5A/JAZ8 and TIFY9/JAZ10. (Microbial infection) Interacts with the pathogenic Pseudomonas syringae HopZ1a protein. In terms of processing, (Microbial infection) Acetylated by Pseudomonas syringae HopZ1a. Ubiquitinated. Targeted for degradation by the SCF(COI1) E3 ubiquitin ligase-proteasome pathway during jasmonate signaling.

It is found in the nucleus. Functionally, repressor of jasmonate responses. The chain is Protein TIFY 3B from Arabidopsis thaliana (Mouse-ear cress).